The chain runs to 491 residues: 4,4'-diapolycopen-4-al dehydrogenase (491 aa).

E208 is a catalytic residue.

This sequence belongs to the carotenoid/retinoid oxidoreductase family. CrtN subfamily.

It carries out the reaction all-trans-4,4'-diapolycopen-4-al + A + H2O = all-trans-4,4'-diapolycopen-4-oate + AH2 + H(+). It participates in carotenoid biosynthesis. Functionally, involved in the biosynthesis of the major C30 carotenoid methyl 4'-[6-O-(acylglycosyl)oxy]-4,4'-diapolycopen-4-oic acid via 4,4'-diapolycopen-4-oic acid intermediate. Catalyzes the oxidation of 4,4'-diapolycopen-4-al to yield 4,4'-diapolycopen-4-oic acid. The polypeptide is 4,4'-diapolycopen-4-al dehydrogenase (Metabacillus indicus (Bacillus indicus)).